The following is a 467-amino-acid chain: 2-succinylbenzoate--CoA ligase (467 aa).

Belongs to the ATP-dependent AMP-binding enzyme family. MenE subfamily.

It carries out the reaction 2-succinylbenzoate + ATP + CoA = 2-succinylbenzoyl-CoA + AMP + diphosphate. It functions in the pathway quinol/quinone metabolism; 1,4-dihydroxy-2-naphthoate biosynthesis; 1,4-dihydroxy-2-naphthoate from chorismate: step 5/7. The protein operates within quinol/quinone metabolism; menaquinone biosynthesis. Its function is as follows. Converts 2-succinylbenzoate (OSB) to 2-succinylbenzoyl-CoA (OSB-CoA). The protein is 2-succinylbenzoate--CoA ligase of Listeria innocua serovar 6a (strain ATCC BAA-680 / CLIP 11262).